A 415-amino-acid chain; its full sequence is Type II methyltransferase M.DdeI (415 aa).

In terms of domain architecture, SAM-dependent MTase C5-type spans 1-373; sequence MNIIDLFAGC…ERISWYFENI (373 aa). The active site involves Cys76.

It belongs to the class I-like SAM-binding methyltransferase superfamily. C5-methyltransferase family.

It catalyses the reaction a 2'-deoxycytidine in DNA + S-adenosyl-L-methionine = a 5-methyl-2'-deoxycytidine in DNA + S-adenosyl-L-homocysteine + H(+). Functionally, a methylase that recognizes the double-stranded sequence 5'-CTNAG-3', methylates C-1 on both strands, and protects the DNA from cleavage by the DdeI endonuclease. The polypeptide is Type II methyltransferase M.DdeI (ddeIM) (Desulfomicrobium norvegicum (strain DSM 1741 / NCIMB 8310) (Desulfovibrio baculatus (strain Norway 4))).